A 397-amino-acid chain; its full sequence is Decapping and exoribonuclease protein (397 aa).

A compositionally biased stretch (basic residues) spans 1-10; it reads MEPRGTKRKA. The segment at 1–30 is disordered; that stretch reads MEPRGTKRKAEKTEVEKPLNKLPRAVPSLR. Substrate-binding positions include R58, E101, and 131–133; that span reads WRG. Adenosine 3',5'-bisphosphate is bound at residue M185. E192 is a Mg(2+) binding site. Substrate contacts are provided by C217 and E234. Residues E234, D236, E253, and L254 each coordinate Mg(2+). D236 lines the adenosine 3',5'-bisphosphate pocket. Positions 253–256 are adenosine 3',5'-bisphosphate; inhibitor; the sequence is ELKT. The substrate site is built by K255 and Q280. Q280 is an adenosine 3',5'-bisphosphate binding site. T392 bears the Phosphothreonine mark. Phosphoserine is present on S394.

The protein belongs to the DXO/Dom3Z family. The cofactor is Mg(2+).

It localises to the nucleus. It carries out the reaction a 5'-end triphospho-ribonucleoside in mRNA + H2O = a 5'-end phospho-ribonucleoside in mRNA + diphosphate + H(+). It catalyses the reaction a 5'-end NAD(+)-phospho-ribonucleoside in mRNA + H2O = a 5'-end phospho-ribonucleoside in mRNA + NAD(+) + H(+). The enzyme catalyses a 5'-end NAD(+)-phospho-ribonucleoside in snoRNA + H2O = a 5'-end phospho-ribonucleoside in snoRNA + NAD(+) + H(+). The catalysed reaction is a 5'-end (N(7)-methyl 5'-triphosphoguanosine)-ribonucleoside-ribonucleotide in mRNA + H2O = a (N(7)-methyl 5'-triphosphoguanosine)-nucleoside + a 5'-end phospho-ribonucleoside in mRNA + H(+). It carries out the reaction a 5'-end FAD-phospho-ribonucleoside in mRNA + H2O = a 5'-end phospho-ribonucleoside in mRNA + FAD + H(+). It catalyses the reaction a 5'-end CoA-ribonucleoside in mRNA + H2O = 3'-dephospho-CoA + a 5'-end phospho-ribonucleoside in mRNA + H(+). With respect to regulation, the 5'-3' exoribonuclease activity is inhibited by adenosine 3',5'-bisphosphate. In terms of biological role, decapping enzyme for NAD-capped RNAs: specifically hydrolyzes the nicotinamide adenine dinucleotide (NAD) cap from a subset of RNAs by removing the entire NAD moiety from the 5'-end of an NAD-capped RNA. The NAD-cap is present at the 5'-end of some RNAs and snoRNAs. In contrast to the canonical 5'-end N7 methylguanosine (m7G) cap, the NAD cap promotes mRNA decay. Preferentially acts on NAD-capped transcripts in response to environmental stress. Also acts as a non-canonical decapping enzyme that removes the entire cap structure of m7G capped or incompletely capped RNAs and mediates their subsequent degradation. Specifically degrades pre-mRNAs with a defective 5'-end m7G cap and is part of a pre-mRNA capping quality control. Has decapping activity toward incomplete 5'-end m7G cap mRNAs such as unmethylated 5'-end-capped RNA (cap0), while it has no activity toward 2'-O-ribose methylated m7G cap (cap1). In contrast to canonical decapping enzymes DCP2 and NUDT16, which cleave the cap within the triphosphate linkage, the decapping activity releases the entire cap structure GpppN and a 5'-end monophosphate RNA. Also has 5'-3' exoribonuclease activities: The 5'-end monophosphate RNA is then degraded by the 5'-3' exoribonuclease activity, enabling this enzyme to decap and degrade incompletely capped mRNAs. Also possesses RNA 5'-pyrophosphohydrolase activity by hydrolyzing the 5'-end triphosphate to release pyrophosphates. Exhibits decapping activity towards FAD-capped RNAs. Exhibits decapping activity towards dpCoA-capped RNAs in vitro. This Mus musculus (Mouse) protein is Decapping and exoribonuclease protein.